A 520-amino-acid polypeptide reads, in one-letter code: GMP synthase [glutamine-hydrolyzing] (520 aa).

The Glutamine amidotransferase type-1 domain maps to 9 to 202; it reads KILILDFGSQ…VRAICGCTGH (194 aa). Cysteine 86 serves as the catalytic Nucleophile. Catalysis depends on residues histidine 176 and glutamate 178. In terms of domain architecture, GMPS ATP-PPase spans 203–395; that stretch reads WTPGQIIEDA…LGLPHQMVWR (193 aa). ATP is bound at residue 230–236; the sequence is SGGVDSS.

As to quaternary structure, homodimer.

It catalyses the reaction XMP + L-glutamine + ATP + H2O = GMP + L-glutamate + AMP + diphosphate + 2 H(+). It participates in purine metabolism; GMP biosynthesis; GMP from XMP (L-Gln route): step 1/1. In terms of biological role, catalyzes the synthesis of GMP from XMP. The chain is GMP synthase [glutamine-hydrolyzing] from Pelobacter propionicus (strain DSM 2379 / NBRC 103807 / OttBd1).